A 177-amino-acid chain; its full sequence is Nuclear export protein (177 aa).

2 short sequence motifs (nuclear export signal) span residues 91 to 100 (LWLPMKSLSL) and 117 to 127 (MKHQILTRLKL).

Binds M1 protein. May interact with human nucleoporins and exportin XPO1/CRM1.

The protein resides in the virion. Its subcellular location is the host nucleus. Its function is as follows. Mediates the nuclear export of encapsidated genomic RNAs (ribonucleoproteins, RNPs). Acts as an adapter between viral RNPs complexes and the nuclear export machinery of the cell. Possesses no intrinsic RNA-binding activity, but includes a C-terminal M1-binding domain. This domain is believed to allow recognition of RNPs to which the M1 protein is bound. Because the M1 protein is not available in large quantities until the later stages of infection, such an indirect recognition mechanism probably ensures that genomic RNPs are not exported from the nucleus before sufficient quantities of viral mRNA and progeny genomic RNA have been synthesized. Furthermore, the RNPs enters the cytoplasm only when they have associated with the M1 protein that is necessary to guide them to the plasma membrane. May down-regulate viral RNA synthesis when overproduced. This Homo sapiens (Human) protein is Nuclear export protein (NS).